The primary structure comprises 218 residues: DNA-directed RNA polymerase III subunit RPC7-like (218 aa).

The interval 130–218 is disordered; the sequence is TIILPKRPPK…SDDNMDEAIY (89 aa). Residues 139 to 160 are compositionally biased toward basic and acidic residues; it reads KSTDDKEETIQKLETLEKKEEE. 2 stretches are compositionally biased toward acidic residues: residues 161–193 and 201–218; these read VTSE…EETD and NGED…EAIY.

The protein belongs to the eukaryotic RPC7 RNA polymerase subunit family. As to quaternary structure, component of the RNA polymerase III (Pol III) complex consisting of 17 subunits. Pol III exists as two alternative complexes defined by the mutually exclusive incorporation of subunit POLR3G/RPC7alpha or POLR3GL/RPC7beta. Found in a trimeric complex with POLR3C/RPC3 and POLR3F/RPC6. Directly interacts with POLR3C. In terms of tissue distribution, expressed in the liver.

Its subcellular location is the nucleus. DNA-dependent RNA polymerase catalyzes the transcription of DNA into RNA using the four ribonucleoside triphosphates as substrates. Specific peripheric component of RNA polymerase III which synthesizes small RNAs, such as 5S rRNA and tRNAs. The sequence is that of DNA-directed RNA polymerase III subunit RPC7-like from Mus musculus (Mouse).